The sequence spans 347 residues: MTAQHTILKIRRPDDWHIHLRDDRMLETVLPYTSRFFGRAIVMPNLTPPITSVASAIAYRQRILAAVPQGDNFHPLMTCYLTDTLDANEIVSGFEQGVFTAAKLYPANATTNSSHGVTSVATISGILEKMQKIGMPLLIHGEVTDPAIDIFDREARFIETILEPLRQDFPELKVVLEHITTKEAAEYVIAGNDYLAATITPQHLMFNRNHMLVGGIRTHLYCLPILKRNTHQQALREAVASGCDRLFLGTDSAPHAKHRKESSCGCAGVFNAQAALSTYATVFEEMNALDKLEAFCSLNGPRFYGLPVNDSWIELHREAVTFPEEIALGDESLIPFLAGQSLNWSVR.

Zn(2+) is bound by residues His17 and His19. Residues 19 to 21 (HLR) and Asn45 contribute to the substrate site. Residues Lys103, His140, and His178 each coordinate Zn(2+). Lys103 carries the post-translational modification N6-carboxylysine. Position 140 (His140) interacts with substrate. Leu223 is a substrate binding site. Asp251 is a Zn(2+) binding site. Asp251 is an active-site residue. His255 and Ala267 together coordinate substrate.

This sequence belongs to the metallo-dependent hydrolases superfamily. DHOase family. Class II DHOase subfamily. Homodimer. The cofactor is Zn(2+).

The enzyme catalyses (S)-dihydroorotate + H2O = N-carbamoyl-L-aspartate + H(+). Its pathway is pyrimidine metabolism; UMP biosynthesis via de novo pathway; (S)-dihydroorotate from bicarbonate: step 3/3. Catalyzes the reversible cyclization of carbamoyl aspartate to dihydroorotate. This Pectobacterium atrosepticum (strain SCRI 1043 / ATCC BAA-672) (Erwinia carotovora subsp. atroseptica) protein is Dihydroorotase.